A 110-amino-acid chain; its full sequence is Protein RALF-like 19 (110 aa).

The signal sequence occupies residues 1 to 23; sequence MGIKILLILGLLTLAVVAESANA. Residues 24–58 constitute a propeptide, removed in mature form; sequence TWTLTKSCVNGQGCIGEDGELDYLMDSETNRRQLA. 2 cysteine pairs are disulfide-bonded: cysteine 76-cysteine 86 and cysteine 99-cysteine 105.

This sequence belongs to the plant rapid alkalinization factor (RALF) family. Proteolytically cleaved, probably by S1P, a subtilisin-like serine protease (subtilase).

Its subcellular location is the secreted. Functionally, cell signaling peptide that may regulate plant stress, growth, and development. Mediates a rapid alkalinization of extracellular space by mediating a transient increase in the cytoplasmic Ca(2+) concentration leading to a calcium-dependent signaling events through a cell surface receptor and a concomitant activation of some intracellular mitogen-activated protein kinases. This chain is Protein RALF-like 19 (RALFL19), found in Arabidopsis thaliana (Mouse-ear cress).